Reading from the N-terminus, the 279-residue chain is Phosphatidylglycerol--prolipoprotein diacylglyceryl transferase (279 aa).

The next 7 membrane-spanning stretches (helical) occupy residues 25 to 45 (WYGL…KFFV), 60 to 80 (YFIW…ILIY), 103 to 123 (FVGI…IATI), 133 to 153 (LWSL…FGRI), 181 to 201 (PSQL…LYFY), 209 to 229 (GELI…TEFL), and 236 to 256 (IGYF…MLIL). Residue arginine 152 coordinates a 1,2-diacyl-sn-glycero-3-phospho-(1'-sn-glycerol).

This sequence belongs to the Lgt family.

The protein resides in the cell inner membrane. The enzyme catalyses L-cysteinyl-[prolipoprotein] + a 1,2-diacyl-sn-glycero-3-phospho-(1'-sn-glycerol) = an S-1,2-diacyl-sn-glyceryl-L-cysteinyl-[prolipoprotein] + sn-glycerol 1-phosphate + H(+). The protein operates within protein modification; lipoprotein biosynthesis (diacylglyceryl transfer). Its function is as follows. Catalyzes the transfer of the diacylglyceryl group from phosphatidylglycerol to the sulfhydryl group of the N-terminal cysteine of a prolipoprotein, the first step in the formation of mature lipoproteins. The chain is Phosphatidylglycerol--prolipoprotein diacylglyceryl transferase from Campylobacter hominis (strain ATCC BAA-381 / DSM 21671 / CCUG 45161 / LMG 19568 / NCTC 13146 / CH001A).